A 115-amino-acid chain; its full sequence is Large ribosomal subunit protein bL21 (115 aa).

Belongs to the bacterial ribosomal protein bL21 family. In terms of assembly, part of the 50S ribosomal subunit. Contacts protein L20.

Its function is as follows. This protein binds to 23S rRNA in the presence of protein L20. This Picosynechococcus sp. (strain ATCC 27264 / PCC 7002 / PR-6) (Agmenellum quadruplicatum) protein is Large ribosomal subunit protein bL21.